We begin with the raw amino-acid sequence, 179 residues long: Large ribosomal subunit protein uL6 (179 aa).

Belongs to the universal ribosomal protein uL6 family. Part of the 50S ribosomal subunit.

Functionally, this protein binds to the 23S rRNA, and is important in its secondary structure. It is located near the subunit interface in the base of the L7/L12 stalk, and near the tRNA binding site of the peptidyltransferase center. The protein is Large ribosomal subunit protein uL6 of Acidothermus cellulolyticus (strain ATCC 43068 / DSM 8971 / 11B).